Consider the following 87-residue polypeptide: Small ribosomal subunit protein bS20 (87 aa).

Residues 1–25 (MANIKSAKKRAVQSEKRRKHNASRR) are disordered.

This sequence belongs to the bacterial ribosomal protein bS20 family.

In terms of biological role, binds directly to 16S ribosomal RNA. In Yersinia pseudotuberculosis serotype O:1b (strain IP 31758), this protein is Small ribosomal subunit protein bS20.